A 299-amino-acid chain; its full sequence is Leucine zipper transcription factor-like protein 1 (299 aa).

A coiled-coil region spans residues 96 to 296 (LKLQTDISEL…DLRKRLAQYE (201 aa)). Residues 145–299 (GTAELLNKEI…KRLAQYEPED (155 aa)) form an interaction with BSS9 region.

Belongs to the LZTFL1 family. Self-associates. Interacts with BBS9; the interaction mediates the association of LZTL1 with the BBsome complex and regulates BBSome ciliary trafficking. Expressed in prostate, ovary, stomach, pancreas, esophagus, breast, liver, bladder, kidney, thyroid, colon and lung (at protein level). Down-regulated in multiple primary tumors (at protein level). Detected in testis, heart, skeletal muscle, thymus, spleen, small intestine, and peripheral blood leukocytes.

Its subcellular location is the cytoplasm. Regulates ciliary localization of the BBSome complex. Together with the BBSome complex, controls SMO ciliary trafficking and contributes to the sonic hedgehog (SHH) pathway regulation. May play a role in neurite outgrowth. May have tumor suppressor function. The chain is Leucine zipper transcription factor-like protein 1 (LZTFL1) from Homo sapiens (Human).